The chain runs to 102 residues: MYAIIKTGGKQLKVEEGQSVFVEKLNVAEGEKVTFDQVLFVGGESTKVGSPVVEGASVAGTVEKQGKQKKITTFKYKAKKNQHTKTGHRQPYTKVMIDSINA.

The protein belongs to the bacterial ribosomal protein bL21 family. As to quaternary structure, part of the 50S ribosomal subunit. Contacts protein L20.

This protein binds to 23S rRNA in the presence of protein L20. The polypeptide is Large ribosomal subunit protein bL21 (Pediococcus pentosaceus (strain ATCC 25745 / CCUG 21536 / LMG 10740 / 183-1w)).